Here is a 673-residue protein sequence, read N- to C-terminus: UPF0313 protein blr7973 (673 aa).

In terms of domain architecture, Radical SAM core spans 332–611; that stretch reads AWDMIKFSVT…KAFLRYHDPD (280 aa). Cys346, Cys350, and Cys353 together coordinate [4Fe-4S] cluster. Residues 632-673 are disordered; sequence RPDQLVPAHQPPGTGKAAGTRRPVRPGGKTQRFTTKGLRVMK.

It belongs to the UPF0313 family. The cofactor is [4Fe-4S] cluster.

The chain is UPF0313 protein blr7973 from Bradyrhizobium diazoefficiens (strain JCM 10833 / BCRC 13528 / IAM 13628 / NBRC 14792 / USDA 110).